Here is a 208-residue protein sequence, read N- to C-terminus: Large ribosomal subunit protein uL4 (208 aa).

Residues Arg-45–Gly-96 form a disordered region. Residues Gly-69–Ser-80 show a composition bias toward polar residues.

Belongs to the universal ribosomal protein uL4 family. As to quaternary structure, part of the 50S ribosomal subunit.

Its function is as follows. One of the primary rRNA binding proteins, this protein initially binds near the 5'-end of the 23S rRNA. It is important during the early stages of 50S assembly. It makes multiple contacts with different domains of the 23S rRNA in the assembled 50S subunit and ribosome. Functionally, forms part of the polypeptide exit tunnel. The chain is Large ribosomal subunit protein uL4 from Chlorobium phaeovibrioides (strain DSM 265 / 1930) (Prosthecochloris vibrioformis (strain DSM 265)).